The chain runs to 264 residues: DNA repair protein RecO (264 aa).

Belongs to the RecO family.

Involved in DNA repair and RecF pathway recombination. This chain is DNA repair protein RecO, found in Leuconostoc citreum (strain KM20).